Here is a 77-residue protein sequence, read N- to C-terminus: Fungal protease inhibitor F (77 aa).

The signal sequence occupies residues 1–22 (MASKNLFVLFFIFALFAANIAA). 4 cysteine pairs are disulfide-bonded: cysteine 25–cysteine 57, cysteine 36–cysteine 49, cysteine 40–cysteine 77, and cysteine 59–cysteine 71.

It belongs to the protease inhibitor I40 family. In terms of tissue distribution, hemolymph.

It is found in the secreted. Its function is as follows. Highly specific for fungal protease and subtilisin. This chain is Fungal protease inhibitor F, found in Bombyx mori (Silk moth).